The following is a 363-amino-acid chain: HAUS augmin-like complex subunit 4 (363 aa).

This sequence belongs to the HAUS4 family. As to quaternary structure, component of the HAUS augmin-like complex. The complex interacts with the gamma-tubulin ring complex and this interaction is required for spindle assembly. Interacts with EML3 (phosphorylated at 'Thr-881').

The protein localises to the cytoplasm. It localises to the cytoskeleton. Its subcellular location is the microtubule organizing center. The protein resides in the centrosome. It is found in the spindle. In terms of biological role, contributes to mitotic spindle assembly, maintenance of centrosome integrity and completion of cytokinesis as part of the HAUS augmin-like complex. This chain is HAUS augmin-like complex subunit 4 (HAUS4), found in Homo sapiens (Human).